We begin with the raw amino-acid sequence, 436 residues long: Ribosomal protein uS12 methylthiotransferase RimO (436 aa).

Residues 2–114 (PNLYLVSLGC…IDEMILKKQN (113 aa)) enclose the MTTase N-terminal domain. Positions 11, 45, 77, 146, 150, and 153 each coordinate [4Fe-4S] cluster. Positions 132–363 (TGSSYHAYIK…IKKQIEGSFK (232 aa)) constitute a Radical SAM core domain. Residues 363–434 (KSLVGEVIKV…KDKLIGEIIC (72 aa)) form the TRAM domain.

This sequence belongs to the methylthiotransferase family. RimO subfamily. [4Fe-4S] cluster is required as a cofactor.

It is found in the cytoplasm. The enzyme catalyses L-aspartate(89)-[ribosomal protein uS12]-hydrogen + (sulfur carrier)-SH + AH2 + 2 S-adenosyl-L-methionine = 3-methylsulfanyl-L-aspartate(89)-[ribosomal protein uS12]-hydrogen + (sulfur carrier)-H + 5'-deoxyadenosine + L-methionine + A + S-adenosyl-L-homocysteine + 2 H(+). Functionally, catalyzes the methylthiolation of an aspartic acid residue of ribosomal protein uS12. The sequence is that of Ribosomal protein uS12 methylthiotransferase RimO from Campylobacter fetus subsp. fetus (strain 82-40).